The sequence spans 483 residues: V-type proton ATPase subunit H (483 aa).

Phosphoserine is present on residues Ser-59 and Ser-483.

It belongs to the V-ATPase H subunit family. V-ATPase is a heteromultimeric enzyme made up of two complexes: the ATP-hydrolytic V1 complex and the proton translocation V0 complex. The V1 complex consists of three catalytic AB heterodimers that form a heterohexamer, three peripheral stalks each consisting of EG heterodimers, one central rotor including subunits D and F, and the regulatory subunits C and H. The proton translocation complex V0 consists of the proton transport subunit a, a ring of proteolipid subunits c9c'', rotary subunit d, subunits e and f, and the accessory subunits ATP6AP1/Ac45 and ATP6AP2/PRR. Interacts with AP2M1.

It is found in the cytoplasmic vesicle. It localises to the clathrin-coated vesicle membrane. Subunit of the V1 complex of vacuolar(H+)-ATPase (V-ATPase), a multisubunit enzyme composed of a peripheral complex (V1) that hydrolyzes ATP and a membrane integral complex (V0) that translocates protons. V-ATPase is responsible for acidifying and maintaining the pH of intracellular compartments and in some cell types, is targeted to the plasma membrane, where it is responsible for acidifying the extracellular environment. Subunit H is essential for V-ATPase activity, but not for the assembly of the complex. Involved in the endocytosis mediated by clathrin-coated pits, required for the formation of endosomes. This is V-type proton ATPase subunit H (Atp6v1h) from Mus musculus (Mouse).